We begin with the raw amino-acid sequence, 316 residues long: Acetyl-coenzyme A carboxylase carboxyl transferase subunit beta, chloroplastic (316 aa).

The 270-residue stretch at 47–316 (LWTRCDNCEN…CKKFQNSFFK (270 aa)) folds into the CoA carboxyltransferase N-terminal domain. Positions 51, 54, 70, and 73 each coordinate Zn(2+). Residues 51-73 (CDNCENMLYVRFLRQNKRICEEC) form a C4-type zinc finger.

This sequence belongs to the AccD/PCCB family. In terms of assembly, acetyl-CoA carboxylase is a heterohexamer composed of biotin carboxyl carrier protein, biotin carboxylase and 2 subunits each of ACCase subunit alpha and ACCase plastid-coded subunit beta (accD). The cofactor is Zn(2+).

The protein resides in the plastid. It localises to the chloroplast stroma. The catalysed reaction is N(6)-carboxybiotinyl-L-lysyl-[protein] + acetyl-CoA = N(6)-biotinyl-L-lysyl-[protein] + malonyl-CoA. The protein operates within lipid metabolism; malonyl-CoA biosynthesis; malonyl-CoA from acetyl-CoA: step 1/1. Functionally, component of the acetyl coenzyme A carboxylase (ACC) complex. Biotin carboxylase (BC) catalyzes the carboxylation of biotin on its carrier protein (BCCP) and then the CO(2) group is transferred by the transcarboxylase to acetyl-CoA to form malonyl-CoA. This chain is Acetyl-coenzyme A carboxylase carboxyl transferase subunit beta, chloroplastic, found in Marchantia polymorpha (Common liverwort).